The chain runs to 342 residues: Phosphate acyltransferase (342 aa).

It belongs to the PlsX family. As to quaternary structure, homodimer. Probably interacts with PlsY.

Its subcellular location is the cytoplasm. It catalyses the reaction a fatty acyl-[ACP] + phosphate = an acyl phosphate + holo-[ACP]. The protein operates within lipid metabolism; phospholipid metabolism. Catalyzes the reversible formation of acyl-phosphate (acyl-PO(4)) from acyl-[acyl-carrier-protein] (acyl-ACP). This enzyme utilizes acyl-ACP as fatty acyl donor, but not acyl-CoA. This is Phosphate acyltransferase from Alkalilimnicola ehrlichii (strain ATCC BAA-1101 / DSM 17681 / MLHE-1).